The following is a 227-amino-acid chain: YEATS domain-containing protein 4 (227 aa).

Residues 15–158 enclose the YEATS domain; that stretch reads RVKGVTIVKP…AMMQQLLTTS (144 aa). Lys-37 is covalently cross-linked (Glycyl lysine isopeptide (Lys-Gly) (interchain with G-Cter in SUMO2)). Positions 93 to 97 are diacetylated histone H3 binding; sequence WGEFE. The segment at 163 to 227 is interaction with MLLT10; the sequence is LGAYKHETEF…LEEDDQAKDI (65 aa). The interval 168–227 is interaction with TACC1; that stretch reads HETEFAELEVKTREKLEAAKKKTSFEIAELKERLKASRETINCLKNEIRKLEEDDQAKDI. A coiled-coil region spans residues 178 to 226; the sequence is KTREKLEAAKKKTSFEIAELKERLKASRETINCLKNEIRKLEEDDQAKD.

In terms of assembly, component of numerous complexes with chromatin remodeling and histone acetyltransferase activity. Component of the NuA4 histone acetyltransferase complex which contains the catalytic subunit KAT5/TIP60 and the subunits EP400, TRRAP/PAF400, BRD8/SMAP, EPC1, DMAP1/DNMAP1, RUVBL1/TIP49, RUVBL2, ING3, actin, ACTL6A/BAF53A, MORF4L1/MRG15, MORF4L2/MRGX, MRGBP, YEATS4/GAS41, VPS72/YL1 and MEAF6. The NuA4 complex interacts with MYC and the adenovirus E1A protein. Component of a NuA4-related complex which contains EP400, TRRAP/PAF400, SRCAP, BRD8/SMAP, EPC1, DMAP1/DNMAP1, RUVBL1/TIP49, RUVBL2, actin, ACTL6A/BAF53A, VPS72 and YEATS4/GAS41. Interacts with MLLT10/AF10. Also interacts with the SWI/SNF component SMARCB1/BAF47, TACC1 and TACC2, and the nuclear matrix protein NUMA1. Expressed in brain, heart, kidney, liver, lung, pancreas, placenta and skeletal muscle.

The protein localises to the nucleus. Its function is as follows. Chromatin reader component of the NuA4 histone acetyltransferase (HAT) complex, a complex involved in transcriptional activation of select genes principally by acetylation of nucleosomal histones H4 and H2A. Specifically recognizes and binds acylated histone H3, with a preference for histone H3 diacetylated at 'Lys-18' and 'Lys-27' (H3K18ac and H3K27ac) or histone H3 diacetylated at 'Lys-14' and 'Lys-27' (H3K14ac and H3K27ac). Also able to recognize and bind crotonylated histone H3. May also recognize and bind histone H3 succinylated at 'Lys-122' (H3K122succ); additional evidences are however required to confirm this result in vivo. Plays a key role in histone variant H2AZ1/H2A.Z deposition into specific chromatin regions: recognizes and binds H3K14ac and H3K27ac on the promoters of actively transcribed genes and recruits NuA4-related complex to deposit H2AZ1/H2A.Z. H2AZ1/H2A.Z deposition is required for maintenance of embryonic stem cell. This is YEATS domain-containing protein 4 from Homo sapiens (Human).